We begin with the raw amino-acid sequence, 255 residues long: Small ribosomal subunit protein eS1 (255 aa).

Position 2 is an N-acetylalanine; partial (alanine 2).

It belongs to the eukaryotic ribosomal protein eS1 family. As to quaternary structure, component of the small ribosomal subunit. Mature ribosomes consist of a small (40S) and a large (60S) subunit. The 40S subunit contains about 33 different proteins and 1 molecule of RNA (18S). The 60S subunit contains about 49 different proteins and 3 molecules of RNA (25S, 5.8S and 5S).

It localises to the cytoplasm. This chain is Small ribosomal subunit protein eS1, found in Yarrowia lipolytica (strain CLIB 122 / E 150) (Yeast).